A 306-amino-acid chain; its full sequence is Putative S-adenosyl-L-methionine-dependent methyltransferase MAP_4190c (306 aa).

S-adenosyl-L-methionine contacts are provided by residues Asp-129 and 158-159; that span reads DL.

It belongs to the UPF0677 family.

In terms of biological role, exhibits S-adenosyl-L-methionine-dependent methyltransferase activity. The sequence is that of Putative S-adenosyl-L-methionine-dependent methyltransferase MAP_4190c from Mycolicibacterium paratuberculosis (strain ATCC BAA-968 / K-10) (Mycobacterium paratuberculosis).